A 125-amino-acid chain; its full sequence is Small ribosomal subunit protein uS13 (125 aa).

Positions 92-125 (RRSLPVRGQRTRTNARTRKGKRKTVAGKKKAVKK) are disordered.

This sequence belongs to the universal ribosomal protein uS13 family. Part of the 30S ribosomal subunit. Forms a loose heterodimer with protein S19. Forms two bridges to the 50S subunit in the 70S ribosome.

In terms of biological role, located at the top of the head of the 30S subunit, it contacts several helices of the 16S rRNA. In the 70S ribosome it contacts the 23S rRNA (bridge B1a) and protein L5 of the 50S subunit (bridge B1b), connecting the 2 subunits; these bridges are implicated in subunit movement. Contacts the tRNAs in the A and P-sites. In Pelodictyon phaeoclathratiforme (strain DSM 5477 / BU-1), this protein is Small ribosomal subunit protein uS13.